We begin with the raw amino-acid sequence, 387 residues long: Phosphoglycerate kinase (387 aa).

Residues 21–23 (DLN), Arg-36, 59–62 (HLGR), Arg-113, and Arg-146 contribute to the substrate site. ATP contacts are provided by residues Lys-197, Glu-314, and 340–343 (GGDT).

This sequence belongs to the phosphoglycerate kinase family. Monomer.

The protein resides in the cytoplasm. The catalysed reaction is (2R)-3-phosphoglycerate + ATP = (2R)-3-phospho-glyceroyl phosphate + ADP. Its pathway is carbohydrate degradation; glycolysis; pyruvate from D-glyceraldehyde 3-phosphate: step 2/5. The polypeptide is Phosphoglycerate kinase (Pseudomonas entomophila (strain L48)).